The following is a 330-amino-acid chain: Bifunctional pinoresinol-lariciresinol reductase 2 (330 aa).

Residues 28–34 (GGTGYLG), Arg-53, and Lys-62 contribute to the NADP(+) site. The Proton acceptor role is filled by Lys-156. Residue Arg-160 participates in NADP(+) binding. His-288 contacts substrate.

It belongs to the NmrA-type oxidoreductase family. Isoflavone reductase subfamily. In terms of assembly, dimer. In terms of tissue distribution, expressed in leaves, stems, leaves and seeds.

The catalysed reaction is (+)-lariciresinol + NADP(+) = (+)-pinoresinol + NADPH + H(+). It catalyses the reaction (-)-secoisolariciresinol + NADP(+) = (+)-lariciresinol + NADPH + H(+). Functionally, reductase involved in lignan biosynthesis. Catalyzes the enantioselective conversion of (+)-pinoresinol into (+)-lariciresinol and of (+)-lariciresinol into (-)-secoisolariciresinol. Abstracts the 4R-hydride from the NADPH cofactor during catalysis. This chain is Bifunctional pinoresinol-lariciresinol reductase 2 (PLR_Lu2), found in Linum usitatissimum (Flax).